Consider the following 223-residue polypeptide: MNQDQLKQAVAQAAVDHILPHLDSKSIVGVGTGSTANFFIDALARHKAEFDGAVASSEATAKRLKEHGIPVYELNTVSELEFYVDGADESNERLELIKGGGAALTREKIVAAVAKTFICIADASKLVPILGQFPLPVEVIPMARSHVARQLVKLGGDPVYREGVLTDNGNIILDVHNLRIDSPVELEEKINAIVGVVTNGLFAARPADLLLLGTADGVKTLKA.

Substrate is bound by residues 32–35 (TGST), 85–88 (DGAD), and 98–101 (KGGG). The active-site Proton acceptor is glutamate 107. A substrate-binding site is contributed by lysine 125.

This sequence belongs to the ribose 5-phosphate isomerase family. In terms of assembly, homodimer.

It carries out the reaction aldehydo-D-ribose 5-phosphate = D-ribulose 5-phosphate. It functions in the pathway carbohydrate degradation; pentose phosphate pathway; D-ribose 5-phosphate from D-ribulose 5-phosphate (non-oxidative stage): step 1/1. In terms of biological role, catalyzes the reversible conversion of ribose-5-phosphate to ribulose 5-phosphate. The chain is Ribose-5-phosphate isomerase A from Pseudomonas aeruginosa (strain LESB58).